Reading from the N-terminus, the 265-residue chain is Mlc titration factor A (265 aa).

His-111, His-148, His-152, and Glu-211 together coordinate Zn(2+).

This sequence belongs to the MtfA family. In terms of assembly, interacts with Mlc. It depends on Zn(2+) as a cofactor.

It is found in the cytoplasm. In terms of biological role, involved in the modulation of the activity of the glucose-phosphotransferase system (glucose-PTS). Interacts with the transcriptional repressor Mlc, preventing its interaction with DNA and leading to the modulation of expression of genes regulated by Mlc, including ptsG, which encodes the PTS system glucose-specific EIICB component. Functionally, shows zinc-dependent metallopeptidase activity. The sequence is that of Mlc titration factor A from Salmonella agona (strain SL483).